The following is a 56-amino-acid chain: Large ribosomal subunit protein eL20 (56 aa).

The tract at residues 1-24 is disordered; sequence MSTYTVRGSFPARDGPQQFEKEVE.

Belongs to the eukaryotic ribosomal protein eL20 family. Part of the 50S ribosomal subunit. Binds 23S rRNA.

The chain is Large ribosomal subunit protein eL20 from Haloarcula marismortui (strain ATCC 43049 / DSM 3752 / JCM 8966 / VKM B-1809) (Halobacterium marismortui).